A 287-amino-acid polypeptide reads, in one-letter code: Probable endoribonuclease YicC (287 aa).

The protein belongs to the YicC/YloC family. A divalent metal cation serves as cofactor.

Its function is as follows. Probably a ssRNA endonuclease. In terms of biological role, might contribute to small RNA (sRNA) regulation. The sequence is that of Probable endoribonuclease YicC from Salmonella typhimurium (strain LT2 / SGSC1412 / ATCC 700720).